We begin with the raw amino-acid sequence, 702 residues long: Elongation factor G (702 aa).

The tr-type G domain maps to 8 to 290 (ERYRNIGISA…AVIDYLPSPV (283 aa)). GTP is bound by residues 17 to 24 (AHIDAGKT), 88 to 92 (DTPGH), and 142 to 145 (NKMD).

This sequence belongs to the TRAFAC class translation factor GTPase superfamily. Classic translation factor GTPase family. EF-G/EF-2 subfamily.

The protein resides in the cytoplasm. Its function is as follows. Catalyzes the GTP-dependent ribosomal translocation step during translation elongation. During this step, the ribosome changes from the pre-translocational (PRE) to the post-translocational (POST) state as the newly formed A-site-bound peptidyl-tRNA and P-site-bound deacylated tRNA move to the P and E sites, respectively. Catalyzes the coordinated movement of the two tRNA molecules, the mRNA and conformational changes in the ribosome. The polypeptide is Elongation factor G (Acidovorax ebreus (strain TPSY) (Diaphorobacter sp. (strain TPSY))).